The following is a 481-amino-acid chain: Pre-mRNA-splicing factor sap114 (481 aa).

The segment covering 1–15 has biased composition (polar residues); sequence MSSLMEFQDRNTTNN. Positions 1-34 are disordered; sequence MSSLMEFQDRNTTNNETEHQKSITDQSSSVPAGV. SURP motif repeat units lie at residues 44-86 and 147-189; these read IIDK…HPYY and VLRL…YPYF. Disordered regions lie at residues 335–373 and 452–481; these read PSLA…QKPV and GVEI…NKRR. Composition is skewed to polar residues over residues 345-368 and 467-481; these read ISST…TQPK and ATQS…NKRR.

Belongs to the 40S cdc5-associated complex (or cwf complex), a spliceosome sub-complex reminiscent of a late-stage spliceosome composed of the U2, U5 and U6 snRNAs and at least brr2, cdc5, cwf2/prp3, cwf3/syf1, cwf4/syf3, cwf5/ecm2, spp42/cwf6, cwf7/spf27, cwf8, cwf9, cwf10, cwf11, cwf12, prp45/cwf13, cwf14, cwf15, cwf16, cwf17, cwf18, cwf19, cwf20, cwf21, cwf22, cwf23, cwf24, cwf25, cwf26, cyp7/cwf27, cwf28, cwf29/ist3, lea1, msl1, prp5/cwf1, prp10, prp12/sap130, prp17, prp22, sap61, sap62, sap114, sap145, slu7, smb1, smd1, smd3, smf1, smg1 and syf2.

Its subcellular location is the nucleus. Functionally, involved in pre-mRNA splicing. May be involved in endoplasmic reticulum-associated protein degradation (ERAD) and required for growth at low and high temperatures. The chain is Pre-mRNA-splicing factor sap114 (sap114) from Schizosaccharomyces pombe (strain 972 / ATCC 24843) (Fission yeast).